The primary structure comprises 188 residues: ATP synthase subunit b (188 aa).

Residues 21–41 form a helical membrane-spanning segment; it reads ILPHLGELIVGIIFAIIIYAV.

This sequence belongs to the ATPase B chain family. As to quaternary structure, F-type ATPases have 2 components, F(1) - the catalytic core - and F(0) - the membrane proton channel. F(1) has five subunits: alpha(3), beta(3), gamma(1), delta(1), epsilon(1). F(0) has three main subunits: a(1), b(2) and c(10-14). The alpha and beta chains form an alternating ring which encloses part of the gamma chain. F(1) is attached to F(0) by a central stalk formed by the gamma and epsilon chains, while a peripheral stalk is formed by the delta and b chains.

It localises to the cell membrane. F(1)F(0) ATP synthase produces ATP from ADP in the presence of a proton or sodium gradient. F-type ATPases consist of two structural domains, F(1) containing the extramembraneous catalytic core and F(0) containing the membrane proton channel, linked together by a central stalk and a peripheral stalk. During catalysis, ATP synthesis in the catalytic domain of F(1) is coupled via a rotary mechanism of the central stalk subunits to proton translocation. Its function is as follows. Component of the F(0) channel, it forms part of the peripheral stalk, linking F(1) to F(0). This is ATP synthase subunit b from Kineococcus radiotolerans (strain ATCC BAA-149 / DSM 14245 / SRS30216).